A 146-amino-acid chain; its full sequence is Late protein OPG112 (146 aa).

The chain crosses the membrane as a helical span at residues Leu10–Phe32.

Belongs to the orthopoxvirus OPG112 family.

The protein resides in the host membrane. Its subcellular location is the host cytoplasm. Contributes to the formation of crescents and immature virions (IV). Interacts with phosphatidylinositol-3-phosphate (PI3P) and phosphatidylinositol-4-phosphate (PI4P) lipids in order to form virion membranes. Mechanistically, mediates proper formation of OPG125-hexamers, and hence the honey comb lattice and spherical immature virus. This chain is Late protein OPG112 (OPG112), found in Bos taurus (Bovine).